The following is a 375-amino-acid chain: Alcohol dehydrogenase 1 (375 aa).

An N-acetylserine modification is found at Ser2. Zn(2+)-binding residues include Cys47, His68, Cys98, Cys101, Cys104, Cys112, and Cys175. NAD(+) contacts are provided by residues 200 to 205 (WSGRVG), Asp224, and Lys229. An N6-succinyllysine modification is found at Lys234. 293–295 (VGV) provides a ligand contact to NAD(+). Lys340 carries the post-translational modification N6-succinyllysine. Arg370 is a binding site for NAD(+).

This sequence belongs to the zinc-containing alcohol dehydrogenase family. Class-I subfamily. Homodimer. Zn(2+) serves as cofactor.

It is found in the cytoplasm. It carries out the reaction a primary alcohol + NAD(+) = an aldehyde + NADH + H(+). The enzyme catalyses a secondary alcohol + NAD(+) = a ketone + NADH + H(+). The polypeptide is Alcohol dehydrogenase 1 (ADH1) (Geomys attwateri (Attwater's pocket gopher)).